The sequence spans 159 residues: 2-C-methyl-D-erythritol 2,4-cyclodiphosphate synthase (159 aa).

Residues Asp-8 and His-10 each contribute to the a divalent metal cation site. Residues 8–10 (DVH) and 34–35 (HS) contribute to the 4-CDP-2-C-methyl-D-erythritol 2-phosphate site. Residue His-42 coordinates a divalent metal cation. 4-CDP-2-C-methyl-D-erythritol 2-phosphate contacts are provided by residues 56–58 (DIG), 61–65 (FPDTD), 100–106 (AQAPKML), 132–135 (TTTE), Phe-139, and Arg-142.

Belongs to the IspF family. In terms of assembly, homotrimer. A divalent metal cation is required as a cofactor.

The enzyme catalyses 4-CDP-2-C-methyl-D-erythritol 2-phosphate = 2-C-methyl-D-erythritol 2,4-cyclic diphosphate + CMP. Its pathway is isoprenoid biosynthesis; isopentenyl diphosphate biosynthesis via DXP pathway; isopentenyl diphosphate from 1-deoxy-D-xylulose 5-phosphate: step 4/6. In terms of biological role, involved in the biosynthesis of isopentenyl diphosphate (IPP) and dimethylallyl diphosphate (DMAPP), two major building blocks of isoprenoid compounds. Catalyzes the conversion of 4-diphosphocytidyl-2-C-methyl-D-erythritol 2-phosphate (CDP-ME2P) to 2-C-methyl-D-erythritol 2,4-cyclodiphosphate (ME-CPP) with a corresponding release of cytidine 5-monophosphate (CMP). The sequence is that of 2-C-methyl-D-erythritol 2,4-cyclodiphosphate synthase from Escherichia coli O127:H6 (strain E2348/69 / EPEC).